Here is a 295-residue protein sequence, read N- to C-terminus: GATA transcription factor 18 (295 aa).

The GATA-type zinc finger occupies 148-202 (SLLARRCANCDTTSTPLWRNGPRGPKSLCNACGIRFKKEERRTTAATGNTVVGAA).

The protein belongs to the type IV zinc-finger family. Class B subfamily. As to quaternary structure, homodimer. Forms heterodimers with GATA19, GATA22 and GATA21. Interacts with JAG. Binds to AGO10/PNH. In terms of tissue distribution, expressed in vegetative and inflorescence shoot apical meristems (SAMs), axillary (SAMs), floral meristems, developing ovules and stamens, vascular tissues, and in the embryo.

Its subcellular location is the nucleus. In terms of biological role, transcriptional factor that specifically binds 5'-GATA-3' or 5'-GAT-3' motifs within gene promoters (including its own promoter and GATA21 promoter), thus regulating the expression of genes mostly involved in hormone responses and floral organ specification (including genes regulating hormones responses). Regulates both flower and shoot apical meristem (SAM) development, especially for establishing organ boundaries in shoots and flowers, probably by controlling the number and position of WUS-expressing cells. Coregulates, with AGO10/PNH, the shoot apical meristem (SAM) organization. Regulates floral organ development via the promotion of JAG and NPR5/BOP2 expression. Modulates cytokinin homeostasis in organ boundaries by regulating CKX3 expression. Involved in cell proliferation and differentiation. Required to position the inductive proembryo boundary via the regulation of gene expression and for early embryonic development. Together with GIF1/AN3, mediates cotyledon identity by preventing ectopic root formation through the repression of PLT1 expression. This chain is GATA transcription factor 18, found in Arabidopsis thaliana (Mouse-ear cress).